Reading from the N-terminus, the 94-residue chain is Potassium channel protein kcv (94 aa).

A helical membrane pass occupies residues 14-34 (FMIHLFILAMFVMIYKFFPGG). Asn-38 carries an N-linked (GlcNAc...) asparagine; by host glycan. Residues 74–94 (TGAKLCTIAHIVTVFFIVLTL) form a helical membrane-spanning segment.

This sequence belongs to the two pore domain potassium channel (TC 1.A.1.12) family.

The protein resides in the membrane. In terms of biological role, potassium-selective channel essential in the virus replication cycle. May be involved in preventing multiple infections (Potential). This Paramecium bursaria Chlorella virus 1 (PBCV-1) protein is Potassium channel protein kcv (A250R).